A 1097-amino-acid chain; its full sequence is Transmembrane protein 132D (1097 aa).

Residues 1-30 (MCPSEMGTLWYLWSPVLISLAALFSKVTEG) form the signal peptide. Over 31 to 913 (RGILESIQRF…LDQAAKGLSD (883 aa)) the chain is Extracellular. Positions 233–245 (DERGDCAKEDSRK) are enriched in basic and acidic residues. Residues 233-263 (DERGDCAKEDSRKSGGTPAGHNDVDESSPPL) are disordered. The chain crosses the membrane as a helical span at residues 914 to 934 (LEIGMYALLGVFCLAILVFLI). Residues 935-1097 (NCVTFALKYR…SCMERLHEHV (163 aa)) are Cytoplasmic-facing. The interval 1021 to 1042 (MLTDDQEQKSEPPTSPTSKRKR) is disordered.

Belongs to the TMEM132 family. Expressed in mature oligodendrocytes in the white and gray matter of the brain.

Its subcellular location is the membrane. Regulates neuronal morphology via inhibition of the WAVE regulatory complex (WCR), a complex that controls F-actin cytoskeletal dynamics. The polypeptide is Transmembrane protein 132D (Tmem132d) (Mus musculus (Mouse)).